The chain runs to 423 residues: 26S proteasome regulatory subunit 6A homolog B (423 aa).

S18 is modified (phosphoserine). 211-218 (GPPGTGKT) is an ATP binding site. Glycyl lysine isopeptide (Lys-Gly) (interchain with G-Cter in ubiquitin) cross-links involve residues K234, K278, and K415.

This sequence belongs to the AAA ATPase family. In terms of assembly, component of the 19S regulatory particle (RP/PA700) base subcomplex of the 26S proteasome. The 26S proteasome is composed of a core protease (CP), known as the 20S proteasome, capped at one or both ends by the 19S regulatory particle (RP/PA700). The RP/PA700 complex is composed of at least 17 different subunits in two subcomplexes, the base and the lid, which form the portions proximal and distal to the 20S proteolytic core, respectively.

The protein resides in the cytoplasm. Its subcellular location is the nucleus. The 26S proteasome is involved in the ATP-dependent degradation of ubiquitinated proteins. The regulatory (or ATPase) complex confers ATP dependency and substrate specificity to the 26S complex. This Arabidopsis thaliana (Mouse-ear cress) protein is 26S proteasome regulatory subunit 6A homolog B (RPT5B).